A 117-amino-acid polypeptide reads, in one-letter code: Reprimo-like protein (117 aa).

The chain crosses the membrane as a helical span at residues 64–84 (VAQIAVLCVLSLTVVFGVFFL). Position 106 is a phosphoserine (S106).

The protein belongs to the reprimo family.

The protein localises to the membrane. This Mus musculus (Mouse) protein is Reprimo-like protein (Rprml).